Reading from the N-terminus, the 793-residue chain is Endonuclease MutS2 (793 aa).

329 to 336 (GPNTGGKT) is a binding site for ATP. The disordered stretch occupies residues 611–639 (LARARQAVEPTEEEQRARRRGEVPRGLKP). The segment covering 623 to 639 (EEQRARRRGEVPRGLKP) has biased composition (basic and acidic residues). In terms of domain architecture, Smr spans 717–792 (VDLRGLMVEE…GDGVTVAKLR (76 aa)).

The protein belongs to the DNA mismatch repair MutS family. MutS2 subfamily. Homodimer. Binds to stalled ribosomes, contacting rRNA.

Its function is as follows. Endonuclease that is involved in the suppression of homologous recombination and thus may have a key role in the control of bacterial genetic diversity. In terms of biological role, acts as a ribosome collision sensor, splitting the ribosome into its 2 subunits. Detects stalled/collided 70S ribosomes which it binds and splits by an ATP-hydrolysis driven conformational change. Acts upstream of the ribosome quality control system (RQC), a ribosome-associated complex that mediates the extraction of incompletely synthesized nascent chains from stalled ribosomes and their subsequent degradation. Probably generates substrates for RQC. In Symbiobacterium thermophilum (strain DSM 24528 / JCM 14929 / IAM 14863 / T), this protein is Endonuclease MutS2.